The chain runs to 272 residues: uncharacterized protein (272 aa).

Residue Glu163 is part of the active site.

Belongs to the glycosyl hydrolase 25 family.

This is an uncharacterized protein from Escherichia coli O157:H7.